The chain runs to 92 residues: Small ribosomal subunit protein uS19 (92 aa).

It belongs to the universal ribosomal protein uS19 family.

Its function is as follows. Protein S19 forms a complex with S13 that binds strongly to the 16S ribosomal RNA. This Staphylococcus carnosus (strain TM300) protein is Small ribosomal subunit protein uS19.